We begin with the raw amino-acid sequence, 415 residues long: Plant UBX domain-containing protein 16 (415 aa).

A UBA domain is found at 19–69 (QLDEEIVLFRQDQLISSFLEIAVDQTAETARILLQTTDWNIDQAVNLFLTN). In terms of domain architecture, UBX spans 333-413 (DRSVVCSLCV…GLANSLISVT (81 aa)).

This chain is Plant UBX domain-containing protein 16, found in Arabidopsis thaliana (Mouse-ear cress).